Consider the following 496-residue polypeptide: Probable E3 ubiquitin-protein ligase XBOS32 (496 aa).

ANK repeat units follow at residues 50–79 (GRNS…EINL), 83–112 (RGQT…NVHR), 117–147 (NGGS…SMPN), 180–209 (GGLT…SVIE), and 223–252 (AGST…SLSA). The segment at 321-368 (CAVCLEGSCSVAAEGCKHEFCTRCALYLCSTSYTSVSPAGAIPCPLCR) adopts an RING-type zinc-finger fold.

The catalysed reaction is S-ubiquitinyl-[E2 ubiquitin-conjugating enzyme]-L-cysteine + [acceptor protein]-L-lysine = [E2 ubiquitin-conjugating enzyme]-L-cysteine + N(6)-ubiquitinyl-[acceptor protein]-L-lysine.. It functions in the pathway protein modification; protein ubiquitination. The polypeptide is Probable E3 ubiquitin-protein ligase XBOS32 (XBOS32) (Oryza sativa subsp. japonica (Rice)).